The following is a 592-amino-acid chain: Threonine dehydratase biosynthetic, chloroplastic (592 aa).

The transit peptide at M1 to E91 directs the protein to the chloroplast. K141 is subject to N6-(pyridoxal phosphate)lysine. ACT-like domains lie at A419–T490 and V512–D583.

The protein belongs to the serine/threonine dehydratase family. The cofactor is pyridoxal 5'-phosphate.

The protein localises to the plastid. It localises to the chloroplast. The catalysed reaction is L-threonine = 2-oxobutanoate + NH4(+). It functions in the pathway amino-acid biosynthesis; L-isoleucine biosynthesis; 2-oxobutanoate from L-threonine: step 1/1. Its activity is regulated as follows. Allosterically inhibited by isoleucine. Strain GM11b is isoleucine feedback insensitive and is resistant to the antimetabolite L-O-methylthreonine. Its function is as follows. Catalyzes the formation of alpha-ketobutyrate from threonine in a two-step reaction. The first step is a dehydration of threonine, followed by rehydration and liberation of ammonia. This is Threonine dehydratase biosynthetic, chloroplastic (OMR1) from Arabidopsis thaliana (Mouse-ear cress).